The following is a 324-amino-acid chain: Beta-ketoacyl-[acyl-carrier-protein] synthase III (324 aa).

Active-site residues include Cys116 and His251. The ACP-binding stretch occupies residues 252 to 256 (QANLR). Asn281 is a catalytic residue.

This sequence belongs to the thiolase-like superfamily. FabH family. In terms of assembly, homodimer.

It localises to the cytoplasm. It carries out the reaction malonyl-[ACP] + acetyl-CoA + H(+) = 3-oxobutanoyl-[ACP] + CO2 + CoA. It functions in the pathway lipid metabolism; fatty acid biosynthesis. In terms of biological role, catalyzes the condensation reaction of fatty acid synthesis by the addition to an acyl acceptor of two carbons from malonyl-ACP. Catalyzes the first condensation reaction which initiates fatty acid synthesis and may therefore play a role in governing the total rate of fatty acid production. Possesses both acetoacetyl-ACP synthase and acetyl transacylase activities. Its substrate specificity determines the biosynthesis of branched-chain and/or straight-chain of fatty acids. This Xylella fastidiosa (strain 9a5c) protein is Beta-ketoacyl-[acyl-carrier-protein] synthase III.